The following is a 278-amino-acid chain: Shikimate dehydrogenase (NADP(+)) (278 aa).

Residues 23–25 and Thr-70 contribute to the shikimate site; that span reads SRS. Lys-74 serves as the catalytic Proton acceptor. Position 86 (Glu-86) interacts with NADP(+). Shikimate contacts are provided by Asn-95 and Asp-110. Residues 135-139, 159-164, and Met-224 contribute to the NADP(+) site; these read GAGGA and NRTKEK. Tyr-226 is a shikimate binding site. Gly-248 contacts NADP(+).

It belongs to the shikimate dehydrogenase family. As to quaternary structure, homodimer.

It catalyses the reaction shikimate + NADP(+) = 3-dehydroshikimate + NADPH + H(+). It functions in the pathway metabolic intermediate biosynthesis; chorismate biosynthesis; chorismate from D-erythrose 4-phosphate and phosphoenolpyruvate: step 4/7. Involved in the biosynthesis of the chorismate, which leads to the biosynthesis of aromatic amino acids. Catalyzes the reversible NADPH linked reduction of 3-dehydroshikimate (DHSA) to yield shikimate (SA). This Alcanivorax borkumensis (strain ATCC 700651 / DSM 11573 / NCIMB 13689 / SK2) protein is Shikimate dehydrogenase (NADP(+)).